A 263-amino-acid chain; its full sequence is Ribonuclease HII (263 aa).

The RNase H type-2 domain maps to 71-262 (QAIAGIDEVG…VKSMCCNSTN (192 aa)). Residues Asp77, Glu78, and Asp172 each coordinate a divalent metal cation.

This sequence belongs to the RNase HII family. Requires Mn(2+) as cofactor. The cofactor is Mg(2+).

Its subcellular location is the cytoplasm. The enzyme catalyses Endonucleolytic cleavage to 5'-phosphomonoester.. In terms of biological role, endonuclease that specifically degrades the RNA of RNA-DNA hybrids. This is Ribonuclease HII from Streptococcus pyogenes serotype M2 (strain MGAS10270).